We begin with the raw amino-acid sequence, 423 residues long: uncharacterized protein (423 aa).

This sequence belongs to the asfivirus E423R family.

The protein localises to the virion. This is an uncharacterized protein from Ornithodoros (relapsing fever ticks).